The sequence spans 421 residues: Solute carrier family 35 member F3 (421 aa).

Residues 25–53 (EGEERPREPPGPAEAQAPAGTEAGGRTSR) form a disordered region. Residues 37–49 (AEAQAPAGTEAGG) are compositionally biased toward low complexity. The next 10 membrane-spanning stretches (helical) occupy residues 66–86 (VFWG…STQL), 98–118 (FTLT…YYAG), 149–169 (VFFT…YLYL), 179–199 (DVSV…WIVL), 208–228 (IVAA…DGFH), 232–252 (VIGI…KVLF), 266–286 (LFLS…PVIL), 305–325 (LCGF…GIAV), 326–346 (TYPT…AVVD), and 352–372 (IVFN…FLLL). Residues 394–421 (KEETAESSGDLGTGPQSRSRRARPSFAR) are disordered. Over residues 411-421 (RSRRARPSFAR) the composition is skewed to basic residues.

This sequence belongs to the SLC35F solute transporter family.

The protein resides in the membrane. The enzyme catalyses thiamine(in) = thiamine(out). In terms of biological role, mediates thiamine transport. This Mus musculus (Mouse) protein is Solute carrier family 35 member F3 (Slc35f3).